A 285-amino-acid polypeptide reads, in one-letter code: MYFQEIIFTLNKYWAQKGCVILQPYDIEVGAGTFHTATFFRVLGPESWNTGYVQPCRRPTDGRYGENPNRLGQYYQYQVILKPSPENSQEVYIESLKALGIDPLKHDIRFVEDDWESPTLGAWGLGWEVWLDGMEITQFTYFQQVGGIDLKPVSVEITYGLERIAMYLQEVENVFDIKWNEKFTYGDIHKQPEIEFSYFNFDHSDPVIIKKHFDEYERESNRLRELGLVFPAYEFCLKCSHLFNLLDARGVLSVAERTNYIARVRTLAKACAESYLIKRYGVING.

The protein belongs to the class-II aminoacyl-tRNA synthetase family. In terms of assembly, tetramer of two alpha and two beta subunits.

The protein resides in the cytoplasm. It catalyses the reaction tRNA(Gly) + glycine + ATP = glycyl-tRNA(Gly) + AMP + diphosphate. In Thermodesulfovibrio yellowstonii (strain ATCC 51303 / DSM 11347 / YP87), this protein is Glycine--tRNA ligase alpha subunit.